The chain runs to 1133 residues: Protein TOPLESS-RELATED PROTEIN 2 (1133 aa).

Residues 4–36 enclose the LisH domain; the sequence is LSRELVFLILQFLDEEKFKETVHKLEQESAFYF. The region spanning 34-92 is the CTLH domain; the sequence is FYFNMKHFEDLVQGGEWDEVEKYLSGFTKVEDNRYSMKIFFEIRKQKYLEALDRHDRAK. WD repeat units lie at residues 344-384, 451-492, 495-536, 539-582, 586-625, 630-669, 771-810, 838-876, 879-919, 922-961, 970-1011, and 1015-1054; these read NQGS…RIAH, AHIG…KQYT, GHEA…SRVD, APGH…IKRT, FRKR…ILTT, GGLP…RLLR, ATSS…RNPN, NPEE…VMTT, APPP…VKSK, GHSK…KKKS, RSGA…RSWS, and ALPA…LRCR. The interval 1102–1133 is disordered; that stretch reads DSDPKWGVAPPQDNGTHPTISAAPAAANKPEV.

Tetramer. Interacts with D53, probably via the EAR motifs. Binds to AP2-1/TOE1, AP2-3/SNB and AP2-2/IDS1. Interacts with WOX1. Interacts with MOF1. Expressed in stems and panicles. Detected in roots, seeds, leaves and sheath. Expressed in the meristem and lateral organ primordia.

It is found in the nucleus. Functionally, transcriptional corepressor involved in branch formation regulation, presumably by suppressing primary branch formation and promoting secondary branch formation. Required for the cell elongation in the first internode and pollen development. Probable downstream regulator of strigolactones signaling important in axillary meristem maintenance. Acts in auxin signaling and is associated with the regulation of histone deacetylation. Essential for the function of miR172 microRNA and its target genes in regulating panicle development. This is Protein TOPLESS-RELATED PROTEIN 2 from Oryza sativa subsp. japonica (Rice).